The chain runs to 1113 residues: Carbamoyl phosphate synthase arginine-specific large chain (1113 aa).

The tract at residues Q23–D420 is carboxyphosphate synthetic domain. Residues R150, R190, G196, G197, K227, L229, E234, G260, I261, H262, Q303, and E317 each coordinate ATP. The ATP-grasp 1 domain maps to A154–L346. Residues Q303, E317, and N319 each contribute to the Mg(2+) site. Residues Q303, E317, and N319 each contribute to the Mn(2+) site. The segment at P421–D568 is oligomerization domain. Positions V569–M955 are carbamoyl phosphate synthetic domain. The ATP-grasp 2 domain maps to S693–L888. The ATP site is built by R729, K768, I770, E775, G800, V801, H802, S803, Q843, and E859. Mg(2+) is bound by residues Q843, E859, and N861. Residues Q843, E859, and N861 each contribute to the Mn(2+) site. Positions S956–T1097 are allosteric domain. Residues F957–T1113 form the MGS-like domain.

It belongs to the CarB family. As to quaternary structure, heterodimer composed of 2 chains; the small (or glutamine) chain promotes the hydrolysis of glutamine to ammonia, which is used by the large (or ammonia) chain to synthesize carbamoyl phosphate. Requires Mg(2+) as cofactor. The cofactor is Mn(2+).

Its subcellular location is the cytoplasm. The catalysed reaction is hydrogencarbonate + L-glutamine + 2 ATP + H2O = carbamoyl phosphate + L-glutamate + 2 ADP + phosphate + 2 H(+). The enzyme catalyses hydrogencarbonate + NH4(+) + 2 ATP = carbamoyl phosphate + 2 ADP + phosphate + 2 H(+). It functions in the pathway amino-acid biosynthesis; L-arginine biosynthesis; carbamoyl phosphate from bicarbonate: step 1/1. In terms of biological role, large subunit of the arginine-specific carbamoyl phosphate synthase (CPSase). CPSase catalyzes the formation of carbamoyl phosphate from the ammonia moiety of glutamine, hydrogencarbonate, and phosphate donated by ATP, constituting the first step of 2 biosynthetic pathways, one leading to arginine and/or urea and the other to pyrimidine nucleotides. The large subunit (synthetase) binds the substrates ammonia (free or transferred from glutamine from the small subunit), hydrogencarbonate and ATP and carries out an ATP-coupled ligase reaction, activating hydrogencarbonate by forming carboxy phosphate which reacts with ammonia to form carbamoyl phosphate. The sequence is that of Carbamoyl phosphate synthase arginine-specific large chain (CPA2) from Eremothecium gossypii (strain ATCC 10895 / CBS 109.51 / FGSC 9923 / NRRL Y-1056) (Yeast).